The following is a 466-amino-acid chain: Adenosylhomocysteinase (466 aa).

Positions 57, 132, and 192 each coordinate substrate. NAD(+) is bound at residue 193-195 (TTT). Lys-222 and Asp-226 together coordinate substrate. Residues Asn-227, 256–261 (GYGDVG), Glu-279, Asn-314, 335–337 (IGH), and Asn-380 contribute to the NAD(+) site.

It belongs to the adenosylhomocysteinase family. It depends on NAD(+) as a cofactor.

The protein localises to the cytoplasm. It carries out the reaction S-adenosyl-L-homocysteine + H2O = L-homocysteine + adenosine. It participates in amino-acid biosynthesis; L-homocysteine biosynthesis; L-homocysteine from S-adenosyl-L-homocysteine: step 1/1. May play a key role in the regulation of the intracellular concentration of adenosylhomocysteine. The chain is Adenosylhomocysteinase from Rhizobium rhizogenes (strain K84 / ATCC BAA-868) (Agrobacterium radiobacter).